A 483-amino-acid polypeptide reads, in one-letter code: Regulatory protein ViaA (483 aa).

It belongs to the ViaA family. Homodimer. Interacts with RavA.

Its subcellular location is the cytoplasm. Functionally, component of the RavA-ViaA chaperone complex, which may act on the membrane to optimize the function of some of the respiratory chains. ViaA stimulates the ATPase activity of RavA. The sequence is that of Regulatory protein ViaA from Salmonella heidelberg (strain SL476).